A 95-amino-acid polypeptide reads, in one-letter code: Aspartyl/glutamyl-tRNA(Asn/Gln) amidotransferase subunit C (95 aa).

It belongs to the GatC family. As to quaternary structure, heterotrimer of A, B and C subunits.

The catalysed reaction is L-glutamyl-tRNA(Gln) + L-glutamine + ATP + H2O = L-glutaminyl-tRNA(Gln) + L-glutamate + ADP + phosphate + H(+). It catalyses the reaction L-aspartyl-tRNA(Asn) + L-glutamine + ATP + H2O = L-asparaginyl-tRNA(Asn) + L-glutamate + ADP + phosphate + 2 H(+). Allows the formation of correctly charged Asn-tRNA(Asn) or Gln-tRNA(Gln) through the transamidation of misacylated Asp-tRNA(Asn) or Glu-tRNA(Gln) in organisms which lack either or both of asparaginyl-tRNA or glutaminyl-tRNA synthetases. The reaction takes place in the presence of glutamine and ATP through an activated phospho-Asp-tRNA(Asn) or phospho-Glu-tRNA(Gln). The sequence is that of Aspartyl/glutamyl-tRNA(Asn/Gln) amidotransferase subunit C from Rhodopseudomonas palustris (strain BisB5).